The following is a 335-amino-acid chain: UPF0353 protein Mjls_2492 (335 aa).

2 helical membrane passes run 18 to 38 and 67 to 87; these read WFFL…IVAL and LPAI…AGPT. The 197-residue stretch at 98–294 folds into the VWFA domain; that stretch reads VVMLVIDVSQ…EQLREVYANL (197 aa). A helical membrane pass occupies residues 309-329; that stretch reads VGWLRLGALVLALSALAALLL.

Belongs to the UPF0353 family.

The protein resides in the cell membrane. This is UPF0353 protein Mjls_2492 from Mycobacterium sp. (strain JLS).